Here is a 469-residue protein sequence, read N- to C-terminus: UDP-N-acetylmuramate--L-alanine ligase (469 aa).

112–118 (GTHGKTT) contacts ATP.

It belongs to the MurCDEF family.

It localises to the cytoplasm. The catalysed reaction is UDP-N-acetyl-alpha-D-muramate + L-alanine + ATP = UDP-N-acetyl-alpha-D-muramoyl-L-alanine + ADP + phosphate + H(+). It functions in the pathway cell wall biogenesis; peptidoglycan biosynthesis. Functionally, cell wall formation. This Laribacter hongkongensis (strain HLHK9) protein is UDP-N-acetylmuramate--L-alanine ligase.